The chain runs to 462 residues: Siroheme synthase (462 aa).

A precorrin-2 dehydrogenase /sirohydrochlorin ferrochelatase region spans residues 1-203 (MQYFPIFVDT…GNNSKAEQMM (203 aa)). Residues 22 to 23 (EV) and 43 to 44 (PW) contribute to the NAD(+) site. A Phosphoserine modification is found at S128. Residues 217-462 (GEVYLVGAGP…EKLNWFGADA (246 aa)) form a uroporphyrinogen-III C-methyltransferase region. S-adenosyl-L-methionine is bound at residue P226. Residue D249 is the Proton acceptor of the active site. The active-site Proton donor is the K271. Residues 302–304 (GGD), I307, 332–333 (TA), M384, and A413 contribute to the S-adenosyl-L-methionine site.

This sequence in the N-terminal section; belongs to the precorrin-2 dehydrogenase / sirohydrochlorin ferrochelatase family. In the C-terminal section; belongs to the precorrin methyltransferase family.

It carries out the reaction uroporphyrinogen III + 2 S-adenosyl-L-methionine = precorrin-2 + 2 S-adenosyl-L-homocysteine + H(+). It catalyses the reaction precorrin-2 + NAD(+) = sirohydrochlorin + NADH + 2 H(+). The catalysed reaction is siroheme + 2 H(+) = sirohydrochlorin + Fe(2+). It functions in the pathway cofactor biosynthesis; adenosylcobalamin biosynthesis; precorrin-2 from uroporphyrinogen III: step 1/1. It participates in cofactor biosynthesis; adenosylcobalamin biosynthesis; sirohydrochlorin from precorrin-2: step 1/1. The protein operates within porphyrin-containing compound metabolism; siroheme biosynthesis; precorrin-2 from uroporphyrinogen III: step 1/1. Its pathway is porphyrin-containing compound metabolism; siroheme biosynthesis; siroheme from sirohydrochlorin: step 1/1. It functions in the pathway porphyrin-containing compound metabolism; siroheme biosynthesis; sirohydrochlorin from precorrin-2: step 1/1. Multifunctional enzyme that catalyzes the SAM-dependent methylations of uroporphyrinogen III at position C-2 and C-7 to form precorrin-2 via precorrin-1. Then it catalyzes the NAD-dependent ring dehydrogenation of precorrin-2 to yield sirohydrochlorin. Finally, it catalyzes the ferrochelation of sirohydrochlorin to yield siroheme. The chain is Siroheme synthase from Pseudoalteromonas atlantica (strain T6c / ATCC BAA-1087).